A 650-amino-acid chain; its full sequence is Probable basic-leucine zipper transcription factor K (650 aa).

Residues 37 to 180 (IDNNNNNYSN…KQQKQQQQEQ (144 aa)) are a coiled coil. Disordered regions lie at residues 109–130 (IPQQQQQEQDQQEDQDQEQEQE) and 242–279 (TTLNTNLQSDNNNNNNNNNNNNNNNNNNNNNNNNNNNL). Residues 118–129 (DQQEDQDQEQEQ) are compositionally biased toward acidic residues. Residues 242–251 (TTLNTNLQSD) show a composition bias toward polar residues. Over residues 252-278 (NNNNNNNNNNNNNNNNNNNNNNNNNNN) the composition is skewed to low complexity. A coiled-coil region spans residues 259–286 (NNNNNNNNNNNNNNNNNNNNLLNEKQIE). One can recognise a bZIP domain in the interval 305–368 (FNKIEKGKRN…IEIMRSEPES (64 aa)). A basic motif region spans residues 307 to 327 (KIEKGKRNQTESSKNFRERKK). Residues 330-337 (IKDIELKL) form a leucine-zipper region. The segment covering 452-466 (NNNNNNNNNNNNNNN) has biased composition (low complexity). A disordered region spans residues 452–473 (NNNNNNNNNNNNNNNDNDDDNE).

It belongs to the bZIP family.

Its subcellular location is the nucleus. Functionally, probable transcriptional regulator. The sequence is that of Probable basic-leucine zipper transcription factor K (bzpK) from Dictyostelium discoideum (Social amoeba).